Consider the following 150-residue polypeptide: Ribosome maturation factor RimP (150 aa).

It belongs to the RimP family.

It is found in the cytoplasm. Required for maturation of 30S ribosomal subunits. The chain is Ribosome maturation factor RimP from Escherichia coli O9:H4 (strain HS).